The following is a 348-amino-acid chain: Dihydroorotase (348 aa).

Residues His17 and His19 each coordinate Zn(2+). Substrate is bound by residues 19–21 (HLR) and Asn45. Residues Lys103, His140, and His178 each contribute to the Zn(2+) site. N6-carboxylysine is present on Lys103. A substrate-binding site is contributed by His140. Position 223 (Leu223) interacts with substrate. A Zn(2+)-binding site is contributed by Asp251. Residue Asp251 is part of the active site. 2 residues coordinate substrate: His255 and Ala267.

Belongs to the metallo-dependent hydrolases superfamily. DHOase family. Class II DHOase subfamily. As to quaternary structure, homodimer. Zn(2+) is required as a cofactor.

The catalysed reaction is (S)-dihydroorotate + H2O = N-carbamoyl-L-aspartate + H(+). Its pathway is pyrimidine metabolism; UMP biosynthesis via de novo pathway; (S)-dihydroorotate from bicarbonate: step 3/3. Its function is as follows. Catalyzes the reversible cyclization of carbamoyl aspartate to dihydroorotate. This chain is Dihydroorotase, found in Escherichia coli O139:H28 (strain E24377A / ETEC).